Reading from the N-terminus, the 179-residue chain is tRNA (cytidine(56)-2'-O)-methyltransferase (179 aa).

Residues Leu-82, 112 to 116 (GAEKV), and 130 to 137 (VGNQPHSE) contribute to the S-adenosyl-L-methionine site.

This sequence belongs to the aTrm56 family. As to quaternary structure, homodimer.

It localises to the cytoplasm. The catalysed reaction is cytidine(56) in tRNA + S-adenosyl-L-methionine = 2'-O-methylcytidine(56) in tRNA + S-adenosyl-L-homocysteine + H(+). Specifically catalyzes the AdoMet-dependent 2'-O-ribose methylation of cytidine at position 56 in tRNAs. In Methanococcus maripaludis (strain C5 / ATCC BAA-1333), this protein is tRNA (cytidine(56)-2'-O)-methyltransferase.